A 65-amino-acid polypeptide reads, in one-letter code: Bucain (65 aa).

Intrachain disulfides connect cysteine 3-cysteine 24, cysteine 17-cysteine 42, cysteine 46-cysteine 57, and cysteine 58-cysteine 63.

The protein belongs to the three-finger toxin family. Short-chain subfamily. Orphan group III sub-subfamily. In terms of tissue distribution, expressed by the venom gland.

It localises to the secreted. In Bungarus candidus (Malayan krait), this protein is Bucain.